The sequence spans 2090 residues: Dysferlin (2090 aa).

Residues 1-101 (MLRVFILFAE…LATPSLSASF (101 aa)) form the C2 1 domain. Residues 1–2056 (MLRVFILFAE…FILWRRFRCA (2056 aa)) are Cytoplasmic-facing. Ca(2+) is bound by residues D18, I19, D21, and N40. The tract at residues 130 to 217 (VPLFPPPASL…SAPPRKLLSD (88 aa)) is disordered. Residues 155-172 (GGEEDTEDQGLTGDEAEP) are compositionally biased toward acidic residues. Residue G164 is modified to Phosphoserine. Phosphothreonine is present on T166. G167 carries the phosphoserine modification. Residues 188 to 199 (PRKPPSHPPPHY) are compositionally biased toward pro residues. 6 consecutive C2 domains span residues 206–323 (RSSA…RKWL), 362–498 (DKED…EEEP), 1146–1272 (GVNR…PLTR), 1320–1448 (PPPQ…AESP), 1571–1689 (PMPP…ARCG), and 1805–1953 (GRPG…EKCS). A209 carries the post-translational modification Phosphoserine. At P219 the chain carries Phosphothreonine. 9 residues coordinate Ca(2+): D411, D419, D467, D469, D475, D1178, D1184, D1240, and D1242. Residues D1604, D1610, D1659, D1661, D1924, S1927, and D1930 each contribute to the Ca(2+) site. The disordered stretch occupies residues 2005–2027 (SEHEERPAGQGRDEPNMNPKLED). A helical transmembrane segment spans residues 2057–2077 (IILFIILFILLLFLGVFVYAF). Residues 2078–2090 (PNYAAMKLVKPFR) are Extracellular-facing.

Belongs to the ferlin family. In terms of assembly, interacts with CAV3. Interacts with AHNAK; the interaction is direct and Ca(2+)-independent. Interacts with AHNAK2; the interaction is direct and Ca(2+)-independent. Interacts with ANXA1; the interaction is Ca(2+)- and injury state-dependent. Interacts with ANXA2; the interaction is Ca(2+)- and injury state-dependent. Interacts with CACNA1S and PARVB. Interacts with TRIM72/MG53; interaction is required for transport to sites of cell injury during repair patch formation. Interacts with RIPOR2; this interaction occurs during early myogenic differentiation. Requires Ca(2+) as cofactor. As to expression, expressed in skeletal and cardiac muscles (at protein level). Expressed in skeletal muscle and heart. Also found in brain, liver and kidney.

It is found in the cell membrane. It localises to the sarcolemma. Its subcellular location is the cytoplasmic vesicle membrane. Its function is as follows. Key calcium ion sensor involved in the Ca(2+)-triggered synaptic vesicle-plasma membrane fusion. Plays a role in the sarcolemma repair mechanism of both skeletal muscle and cardiomyocytes that permits rapid resealing of membranes disrupted by mechanical stress. This chain is Dysferlin (Dysf), found in Mus musculus (Mouse).